We begin with the raw amino-acid sequence, 292 residues long: Ribosomal RNA small subunit methyltransferase A (292 aa).

S-adenosyl-L-methionine-binding residues include N28, L30, G55, E76, D101, and N126.

Belongs to the class I-like SAM-binding methyltransferase superfamily. rRNA adenine N(6)-methyltransferase family. RsmA subfamily.

It is found in the cytoplasm. It catalyses the reaction adenosine(1518)/adenosine(1519) in 16S rRNA + 4 S-adenosyl-L-methionine = N(6)-dimethyladenosine(1518)/N(6)-dimethyladenosine(1519) in 16S rRNA + 4 S-adenosyl-L-homocysteine + 4 H(+). Specifically dimethylates two adjacent adenosines (A1518 and A1519) in the loop of a conserved hairpin near the 3'-end of 16S rRNA in the 30S particle. May play a critical role in biogenesis of 30S subunits. The protein is Ribosomal RNA small subunit methyltransferase A of Bacillus thuringiensis (strain Al Hakam).